We begin with the raw amino-acid sequence, 612 residues long: Coagulation factor XII (612 aa).

Positions 1-19 are cleaved as a signal peptide; the sequence is MRALLLLGALLVSLESTVS. A Fibronectin type-II domain is found at 42 to 90; the sequence is VTGEPCHFPFQYHRQLHHKCIHRGRPGPRPWCATTPNFEKDQRWAYCLE. 20 cysteine pairs are disulfide-bonded: Cys47–Cys73, Cys61–Cys88, Cys98–Cys110, Cys104–Cys119, Cys121–Cys130, Cys135–Cys163, Cys161–Cys170, Cys178–Cys189, Cys183–Cys198, Cys200–Cys209, Cys217–Cys306, Cys240–Cys288, Cys268–Cys301, Cys355–Cys482, Cys393–Cys409, Cys401–Cys471, Cys432–Cys435, Cys498–Cys566, Cys529–Cys545, and Cys556–Cys587. The region spanning 94–131 is the EGF-like 1 domain; that stretch reads VKDHCSKHNPCQKGGTCVNMPDGPRCICADHFTGKHCQ. Residue Thr109 is glycosylated (O-linked (Fuc) threonine). One can recognise a Fibronectin type-I domain in the interval 133-173; the sequence is EKCFEPQFFRFFHENEIWHRLEPAGVVKCQCKGPNAQCKPL. Positions 174-210 constitute an EGF-like 2 domain; sequence ASQVCRTNPCLNGGSCLQAEGHRLCRCAPSFAGRLCD. Residues 217–306 enclose the Kringle domain; it reads CYDDRDRGLS…SWNYCRLAPC (90 aa). 2 N-linked (GlcNAc...) asparagine glycosylation sites follow: Asn251 and Asn282. One can recognise a Peptidase S1 domain in the interval 369–611; sequence VVGGLVALPG…YLAWIREHTA (243 aa). The active-site Charge relay system is His408. A glycan (N-linked (GlcNAc...) asparagine) is linked at Asn429. The active-site Charge relay system is Asp457. Catalysis depends on Ser560, which acts as the Charge relay system.

This sequence belongs to the peptidase S1 family. Interacts with HRG; the interaction, which is enhanced in the presence of zinc ions and inhibited by heparin-binding, inhibits factor XII autoactivation and contact-initiated coagulation. O- and N-glycosylated.

The protein resides in the secreted. The catalysed reaction is Selective cleavage of Arg-|-Ile bonds in factor VII to form factor VIIa and factor XI to form factor XIa.. With respect to regulation, activity is promoted in the presence of negatively charged surfaces. In terms of biological role, factor XII is a serum glycoprotein that participates in the initiation of blood coagulation, fibrinolysis, and the generation of bradykinin and angiotensin. Prekallikrein is cleaved by factor XII to form kallikrein, which then cleaves factor XII first to alpha-factor XIIa and then to beta-factor XIIa. Alpha-factor XIIa activates factor XI to factor XIa. The polypeptide is Coagulation factor XII (F12) (Bos taurus (Bovine)).